The primary structure comprises 300 residues: Porphobilinogen deaminase (300 aa).

Position 239 is an S-(dipyrrolylmethanemethyl)cysteine (C239).

It belongs to the HMBS family. Monomer. Dipyrromethane is required as a cofactor.

The catalysed reaction is 4 porphobilinogen + H2O = hydroxymethylbilane + 4 NH4(+). It participates in porphyrin-containing compound metabolism; protoporphyrin-IX biosynthesis; coproporphyrinogen-III from 5-aminolevulinate: step 2/4. Functionally, tetrapolymerization of the monopyrrole PBG into the hydroxymethylbilane pre-uroporphyrinogen in several discrete steps. The chain is Porphobilinogen deaminase from Francisella tularensis subsp. holarctica (strain OSU18).